A 95-amino-acid chain; its full sequence is UPF0512 protein H (95 aa).

It belongs to the UPF0512 family.

The protein is UPF0512 protein H of Dictyostelium discoideum (Social amoeba).